Here is a 244-residue protein sequence, read N- to C-terminus: Small ribosomal subunit protein uS3 (244 aa).

The KH type-2 domain occupies 39–110 (IRDYVRKNLS…QIRINVIEVE (72 aa)). The disordered stretch occupies residues 215 to 244 (EDAAPSNVGQPRRRNQQRRRQQFEDRSNEG). Residues 225 to 234 (PRRRNQQRRR) show a composition bias toward basic residues. The span at 235-244 (QQFEDRSNEG) shows a compositional bias: basic and acidic residues.

The protein belongs to the universal ribosomal protein uS3 family. In terms of assembly, part of the 30S ribosomal subunit. Forms a tight complex with proteins S10 and S14.

Functionally, binds the lower part of the 30S subunit head. Binds mRNA in the 70S ribosome, positioning it for translation. The polypeptide is Small ribosomal subunit protein uS3 (Synechococcus sp. (strain ATCC 27144 / PCC 6301 / SAUG 1402/1) (Anacystis nidulans)).